A 511-amino-acid polypeptide reads, in one-letter code: 2-isopropylmalate synthase (511 aa).

Residues 1-16 are compositionally biased toward basic and acidic residues; that stretch reads MTRKIDIFDTTLRDGE. A disordered region spans residues 1–23; sequence MTRKIDIFDTTLRDGEQSPGASM. The 264-residue stretch at 5-268 folds into the Pyruvate carboxyltransferase domain; sequence IDIFDTTLRD…HTDVVTQELT (264 aa). Mn(2+) contacts are provided by Asp14, His203, His205, and Asn239. Residues 392–511 are regulatory domain; the sequence is ALESVQVVCG…IQTTRSKQGK (120 aa).

This sequence belongs to the alpha-IPM synthase/homocitrate synthase family. LeuA type 1 subfamily. In terms of assembly, homodimer. The cofactor is Mn(2+).

The protein localises to the cytoplasm. The enzyme catalyses 3-methyl-2-oxobutanoate + acetyl-CoA + H2O = (2S)-2-isopropylmalate + CoA + H(+). Its pathway is amino-acid biosynthesis; L-leucine biosynthesis; L-leucine from 3-methyl-2-oxobutanoate: step 1/4. In terms of biological role, catalyzes the condensation of the acetyl group of acetyl-CoA with 3-methyl-2-oxobutanoate (2-ketoisovalerate) to form 3-carboxy-3-hydroxy-4-methylpentanoate (2-isopropylmalate). This Olsenella uli (strain ATCC 49627 / DSM 7084 / CCUG 31166 / CIP 109912 / JCM 12494 / LMG 11480 / NCIMB 702895 / VPI D76D-27C) (Lactobacillus uli) protein is 2-isopropylmalate synthase.